A 280-amino-acid chain; its full sequence is Eukaryotic translation initiation factor 3 subunit F-1 (280 aa).

The MPN domain maps to 8 to 138 (VRVHPVVLFQ…LRAYICIQLG (131 aa)).

The protein belongs to the eIF-3 subunit F family. As to quaternary structure, component of the eukaryotic translation initiation factor 3 (eIF-3) complex. The eIF-3 complex interacts with pix.

It is found in the cytoplasm. Component of the eukaryotic translation initiation factor 3 (eIF-3) complex, which is involved in protein synthesis of a specialized repertoire of mRNAs and, together with other initiation factors, stimulates binding of mRNA and methionyl-tRNAi to the 40S ribosome. The eIF-3 complex specifically targets and initiates translation of a subset of mRNAs involved in cell proliferation. This Drosophila mojavensis (Fruit fly) protein is Eukaryotic translation initiation factor 3 subunit F-1.